A 265-amino-acid polypeptide reads, in one-letter code: Phosphonates import ATP-binding protein PhnC 1 (265 aa).

The ABC transporter domain maps to 3–247 (LRLSGIELRH…HLDTLYANEQ (245 aa)). Residue 36–43 (GPSGAGKT) participates in ATP binding. A disordered region spans residues 245 to 265 (NEQLSPQPAPDVSETPWTPRC).

This sequence belongs to the ABC transporter superfamily. Phosphonates importer (TC 3.A.1.9.1) family. The complex is composed of two ATP-binding proteins (PhnC), two transmembrane proteins (PhnE) and a solute-binding protein (PhnD).

It is found in the cell inner membrane. The catalysed reaction is phosphonate(out) + ATP + H2O = phosphonate(in) + ADP + phosphate + H(+). Its function is as follows. Part of the ABC transporter complex PhnCDE involved in phosphonates import. Responsible for energy coupling to the transport system. The protein is Phosphonates import ATP-binding protein PhnC 1 of Pseudomonas savastanoi pv. phaseolicola (strain 1448A / Race 6) (Pseudomonas syringae pv. phaseolicola (strain 1448A / Race 6)).